Consider the following 309-residue polypeptide: Olfactory receptor 1A1 (309 aa).

Residues 1–25 (MRENNQSSTLEFILLGVTGQQEQED) are Extracellular-facing. An N-linked (GlcNAc...) asparagine glycan is attached at asparagine 5. Residues 26 to 49 (FFYILFLFIYPITLIGNLLIVLAI) form a helical membrane-spanning segment. The Cytoplasmic segment spans residues 50 to 57 (CSDVHLHN). Residues 58 to 79 (PMYFLLANLSLVDIFFSSVTIP) form a helical membrane-spanning segment. Residues 80-100 (KMLANHLSGSKSISFGGCLTQ) are Extracellular-facing. The cysteines at positions 97 and 189 are disulfide-linked. Residues 101 to 120 (MYFMIDLGNTDSYTLAAMAY) traverse the membrane as a helical segment. Topologically, residues 121–139 (DRAVAISRPLHYTTIMSPR) are cytoplasmic. The helical transmembrane segment at 140 to 158 (SCIWLIAGSWVIGNANALP) threads the bilayer. Residues 159–195 (HTLLTASLSFCGNQEVANFYCDITPLLKLSCSDIHFH) lie on the Extracellular side of the membrane. A helical membrane pass occupies residues 196-218 (VKMMYLGVGIFSVPLLCIIVSYI). The Cytoplasmic segment spans residues 219-235 (RVFSTVFQVPSTKGVLK). The chain crosses the membrane as a helical span at residues 236–258 (AFSTCGSHLTVVSLYYGTVMGMY). Over 259–270 (FRPLTNYSLKDA) the chain is Extracellular. A glycan (N-linked (GlcNAc...) asparagine) is linked at asparagine 264. Residues 271-290 (VITVMCTAVTPMLNPFIYSL) form a helical membrane-spanning segment. The Cytoplasmic portion of the chain corresponds to 291–309 (RNRDMKAALQKLFNKRISS).

This sequence belongs to the G-protein coupled receptor 1 family.

Its subcellular location is the cell membrane. Functionally, odorant receptor. The polypeptide is Olfactory receptor 1A1 (OR1A1) (Gorilla gorilla gorilla (Western lowland gorilla)).